The primary structure comprises 168 residues: Ribosome maturation factor RimM (168 aa).

Residues 94–167 (DGNYYHHQII…KVIIELLDGL (74 aa)) form the PRC barrel domain.

The protein belongs to the RimM family. As to quaternary structure, binds ribosomal protein uS19.

The protein resides in the cytoplasm. An accessory protein needed during the final step in the assembly of 30S ribosomal subunit, possibly for assembly of the head region. Essential for efficient processing of 16S rRNA. May be needed both before and after RbfA during the maturation of 16S rRNA. It has affinity for free ribosomal 30S subunits but not for 70S ribosomes. The polypeptide is Ribosome maturation factor RimM (Ligilactobacillus salivarius (strain UCC118) (Lactobacillus salivarius)).